A 467-amino-acid polypeptide reads, in one-letter code: Abscisic acid 8'-hydroxylase 1 (467 aa).

A helical transmembrane segment spans residues 5 to 24 (ALFLTLFAGSLFLYFLRCLI). Residue Cys411 participates in heme binding.

Belongs to the cytochrome P450 family. Requires heme as cofactor. Mainly expressed in flowers, siliques, roots and stems. Lower expression in rosette leaves and dry seeds. Expressed in vascular tissues of embryo during the seed development.

It is found in the membrane. It carries out the reaction 2-cis-(+)-abscisate + reduced [NADPH--hemoprotein reductase] + O2 = (+)-8'-hydroxyabscisate + oxidized [NADPH--hemoprotein reductase] + H2O + H(+). The protein operates within plant hormone degradation; abscisic acid degradation. In terms of biological role, involved in the oxidative degradation of abscisic acid. Plays an important role in determining abscisic acid levels in dry seeds and in the control of postgermination growth. The sequence is that of Abscisic acid 8'-hydroxylase 1 (CYP707A1) from Arabidopsis thaliana (Mouse-ear cress).